The following is a 358-amino-acid chain: Peptide chain release factor 1 (358 aa).

Gln233 is subject to N5-methylglutamine.

It belongs to the prokaryotic/mitochondrial release factor family. In terms of processing, methylated by PrmC. Methylation increases the termination efficiency of RF1.

The protein localises to the cytoplasm. In terms of biological role, peptide chain release factor 1 directs the termination of translation in response to the peptide chain termination codons UAG and UAA. The chain is Peptide chain release factor 1 from Listeria innocua serovar 6a (strain ATCC BAA-680 / CLIP 11262).